The chain runs to 100 residues: Large ribosomal subunit protein uL23 (100 aa).

It belongs to the universal ribosomal protein uL23 family. In terms of assembly, part of the 50S ribosomal subunit. Contacts protein L29, and trigger factor when it is bound to the ribosome.

Its function is as follows. One of the early assembly proteins it binds 23S rRNA. One of the proteins that surrounds the polypeptide exit tunnel on the outside of the ribosome. Forms the main docking site for trigger factor binding to the ribosome. The protein is Large ribosomal subunit protein uL23 of Synechococcus sp. (strain RCC307).